An 81-amino-acid polypeptide reads, in one-letter code: ATP synthase subunit c (81 aa).

The next 2 helical transmembrane spans lie at 7–27 (AASV…PGLG) and 57–77 (FAFM…LLFA).

The protein belongs to the ATPase C chain family. As to quaternary structure, F-type ATPases have 2 components, F(1) - the catalytic core - and F(0) - the membrane proton channel. F(1) has five subunits: alpha(3), beta(3), gamma(1), delta(1), epsilon(1). F(0) has four main subunits: a(1), b(1), b'(1) and c(10-14). The alpha and beta chains form an alternating ring which encloses part of the gamma chain. F(1) is attached to F(0) by a central stalk formed by the gamma and epsilon chains, while a peripheral stalk is formed by the delta, b and b' chains.

It localises to the cellular thylakoid membrane. F(1)F(0) ATP synthase produces ATP from ADP in the presence of a proton or sodium gradient. F-type ATPases consist of two structural domains, F(1) containing the extramembraneous catalytic core and F(0) containing the membrane proton channel, linked together by a central stalk and a peripheral stalk. During catalysis, ATP synthesis in the catalytic domain of F(1) is coupled via a rotary mechanism of the central stalk subunits to proton translocation. In terms of biological role, key component of the F(0) channel; it plays a direct role in translocation across the membrane. A homomeric c-ring of between 10-14 subunits forms the central stalk rotor element with the F(1) delta and epsilon subunits. The polypeptide is ATP synthase subunit c (Prochlorococcus marinus (strain MIT 9301)).